An 883-amino-acid chain; its full sequence is Phosphoenolpyruvate carboxylase (883 aa).

Residues histidine 138 and lysine 546 contribute to the active site.

This sequence belongs to the PEPCase type 1 family. Requires Mg(2+) as cofactor.

It carries out the reaction oxaloacetate + phosphate = phosphoenolpyruvate + hydrogencarbonate. In terms of biological role, forms oxaloacetate, a four-carbon dicarboxylic acid source for the tricarboxylic acid cycle. This Salmonella gallinarum (strain 287/91 / NCTC 13346) protein is Phosphoenolpyruvate carboxylase.